We begin with the raw amino-acid sequence, 251 residues long: Gamma-glutamyl peptidase 4 (251 aa).

In terms of domain architecture, Glutamine amidotransferase type-1 spans 16–213 (SEFAKKTYGG…IDRVLAGGHI (198 aa)). Residue C100 is the Nucleophile of the active site. Active-site residues include H192 and E194.

The protein belongs to the peptidase C26 family.

It localises to the cytoplasm. Its subcellular location is the cytosol. Its pathway is secondary metabolite biosynthesis. In terms of biological role, involved in glucosinolate biosynthesis. Hydrolyzes the gamma-glutamyl peptide bond of several glutathione (GSH) conjugates to produce Cys-Gly conjugates related to glucosinolates. The gamma-Glu-Cys-Gly-GSH conjugates are the sulfur-donating molecule in glucosinolate biosynthesis. This chain is Gamma-glutamyl peptidase 4, found in Arabidopsis thaliana (Mouse-ear cress).